The chain runs to 384 residues: Dual-specificity RNA methyltransferase RlmN (384 aa).

Glu-93 serves as the catalytic Proton acceptor. Residues 99-339 (EDTRGTLCVS…TTIRKTRGDD (241 aa)) enclose the Radical SAM core domain. A disulfide bridge connects residues Cys-106 and Cys-344. [4Fe-4S] cluster contacts are provided by Cys-113, Cys-117, and Cys-120. S-adenosyl-L-methionine-binding positions include 170-171 (GE), Ser-202, 224-226 (SLH), and Asn-301. The active-site S-methylcysteine intermediate is Cys-344.

This sequence belongs to the radical SAM superfamily. RlmN family. It depends on [4Fe-4S] cluster as a cofactor.

The protein resides in the cytoplasm. The enzyme catalyses adenosine(2503) in 23S rRNA + 2 reduced [2Fe-2S]-[ferredoxin] + 2 S-adenosyl-L-methionine = 2-methyladenosine(2503) in 23S rRNA + 5'-deoxyadenosine + L-methionine + 2 oxidized [2Fe-2S]-[ferredoxin] + S-adenosyl-L-homocysteine. It carries out the reaction adenosine(37) in tRNA + 2 reduced [2Fe-2S]-[ferredoxin] + 2 S-adenosyl-L-methionine = 2-methyladenosine(37) in tRNA + 5'-deoxyadenosine + L-methionine + 2 oxidized [2Fe-2S]-[ferredoxin] + S-adenosyl-L-homocysteine. Specifically methylates position 2 of adenine 2503 in 23S rRNA and position 2 of adenine 37 in tRNAs. m2A2503 modification seems to play a crucial role in the proofreading step occurring at the peptidyl transferase center and thus would serve to optimize ribosomal fidelity. The sequence is that of Dual-specificity RNA methyltransferase RlmN from Cupriavidus metallidurans (strain ATCC 43123 / DSM 2839 / NBRC 102507 / CH34) (Ralstonia metallidurans).